Reading from the N-terminus, the 239-residue chain is RNA polymerase sigma-35 factor (239 aa).

Positions 1-27 (MMKLKFYLVYLWYKVLLKLGIKTDEIY) are excised as a propeptide. The Polymerase core binding signature appears at 86 to 99 (DLISIGTIGLIKAV). The H-T-H motif DNA-binding region spans 206-225 (QKDVADMLGISQSYISRLEK).

It belongs to the sigma-70 factor family. In terms of processing, proteolytically cleaved in the N-terminus probably by a SpoIIGA homolog to yield the active peptide.

Sigma factors are initiation factors that promote the attachment of RNA polymerase to specific initiation sites and are then released. This sigma factor directs the transcription of crystal protein genes, a sporulation-regulated event. The protein is RNA polymerase sigma-35 factor (sigE) of Bacillus anthracis.